A 540-amino-acid polypeptide reads, in one-letter code: Probable H/ACA ribonucleoprotein complex subunit 4 (540 aa).

Residues 1 to 24 (MTTDKKSKSKSSEKSTQEVEQVIK) are disordered. Aspartate 109 acts as the Nucleophile in catalysis. A PUA domain is found at 280 to 355 (YKRIVVKDSA…VVATIKRVIM (76 aa)). The tract at residues 414–540 (SPVESMNVDT…DKKEKKKSKN (127 aa)) is disordered. The stretch at 448–494 (KKEKKDKKEKKKDSSDDESEEEKSSKKDKKEKKEKKEKKEKKSSKDD) forms a coiled coil. The segment covering 473 to 489 (KKDKKEKKEKKEKKEKK) has biased composition (basic residues). Composition is skewed to basic and acidic residues over residues 490-503 (SSKD…SKKE) and 513-528 (SDKD…DKKD). The segment covering 529-540 (KKDKKEKKKSKN) has biased composition (basic residues).

This sequence belongs to the pseudouridine synthase TruB family. In terms of assembly, component of the small nucleolar ribonucleoprotein particles containing H/ACA-type snoRNAs (H/ACA snoRNPs).

Its subcellular location is the nucleus. It localises to the nucleolus. It carries out the reaction a uridine in RNA = a pseudouridine in RNA. Functionally, plays a central role in ribosomal RNA processing. Probable catalytic subunit of H/ACA small nucleolar ribonucleoprotein (H/ACA snoRNP) complex, which catalyzes pseudouridylation of rRNA. This involves the isomerization of uridine such that the ribose is subsequently attached to C5, instead of the normal N1. Pseudouridine ('psi') residues may serve to stabilize the conformation of rRNAs. The protein is Probable H/ACA ribonucleoprotein complex subunit 4 (nola4) of Dictyostelium discoideum (Social amoeba).